Consider the following 491-residue polypeptide: Aspartyl/glutamyl-tRNA(Asn/Gln) amidotransferase subunit B (491 aa).

Belongs to the GatB/GatE family. GatB subfamily. In terms of assembly, heterotrimer of A, B and C subunits.

It catalyses the reaction L-glutamyl-tRNA(Gln) + L-glutamine + ATP + H2O = L-glutaminyl-tRNA(Gln) + L-glutamate + ADP + phosphate + H(+). It carries out the reaction L-aspartyl-tRNA(Asn) + L-glutamine + ATP + H2O = L-asparaginyl-tRNA(Asn) + L-glutamate + ADP + phosphate + 2 H(+). Its function is as follows. Allows the formation of correctly charged Asn-tRNA(Asn) or Gln-tRNA(Gln) through the transamidation of misacylated Asp-tRNA(Asn) or Glu-tRNA(Gln) in organisms which lack either or both of asparaginyl-tRNA or glutaminyl-tRNA synthetases. The reaction takes place in the presence of glutamine and ATP through an activated phospho-Asp-tRNA(Asn) or phospho-Glu-tRNA(Gln). In Paraburkholderia phymatum (strain DSM 17167 / CIP 108236 / LMG 21445 / STM815) (Burkholderia phymatum), this protein is Aspartyl/glutamyl-tRNA(Asn/Gln) amidotransferase subunit B.